The chain runs to 271 residues: Thymidine kinase (271 aa).

ATP-binding positions include 74–81 (GPMFAGKT) and 152–155 (DEAQ). The active-site Proton acceptor is the E153. Residue Y184 coordinates substrate. 2 residues coordinate Zn(2+): C209 and C212. A substrate-binding site is contributed by Y237. C241 lines the Zn(2+) pocket.

It belongs to the thymidine kinase family.

It catalyses the reaction thymidine + ATP = dTMP + ADP + H(+). The sequence is that of Thymidine kinase (TK) from Oryza sativa subsp. japonica (Rice).